The chain runs to 177 residues: Adenine phosphoribosyltransferase (177 aa).

Belongs to the purine/pyrimidine phosphoribosyltransferase family. Homodimer.

It localises to the cytoplasm. The enzyme catalyses AMP + diphosphate = 5-phospho-alpha-D-ribose 1-diphosphate + adenine. It functions in the pathway purine metabolism; AMP biosynthesis via salvage pathway; AMP from adenine: step 1/1. Functionally, catalyzes a salvage reaction resulting in the formation of AMP, that is energically less costly than de novo synthesis. The protein is Adenine phosphoribosyltransferase of Rhodococcus opacus (strain B4).